A 132-amino-acid polypeptide reads, in one-letter code: UPF0060 membrane protein SG1469 (132 aa).

3 helical membrane-spanning segments follow: residues 5 to 25 (VLLY…PYCY), 32 to 52 (LLLI…VLYP), and 60 to 80 (AAYG…IDGI).

The protein belongs to the UPF0060 family.

It is found in the cell inner membrane. The protein is UPF0060 membrane protein SG1469 of Sodalis glossinidius (strain morsitans).